Reading from the N-terminus, the 677-residue chain is DNA ligase (677 aa).

Residues 38–42, 87–88, and E119 contribute to the NAD(+) site; these read DSVYD and SL. The active-site N6-AMP-lysine intermediate is the K121. NAD(+) is bound by residues R142, E179, K296, and K320. Zn(2+) contacts are provided by C414, C417, C432, and C438. One can recognise a BRCT domain in the interval 595-677; it reads VVKSEIAGKT…LKLLKSKGVF (83 aa).

Belongs to the NAD-dependent DNA ligase family. LigA subfamily. Mg(2+) serves as cofactor. It depends on Mn(2+) as a cofactor.

It catalyses the reaction NAD(+) + (deoxyribonucleotide)n-3'-hydroxyl + 5'-phospho-(deoxyribonucleotide)m = (deoxyribonucleotide)n+m + AMP + beta-nicotinamide D-nucleotide.. In terms of biological role, DNA ligase that catalyzes the formation of phosphodiester linkages between 5'-phosphoryl and 3'-hydroxyl groups in double-stranded DNA using NAD as a coenzyme and as the energy source for the reaction. It is essential for DNA replication and repair of damaged DNA. The chain is DNA ligase from Coxiella burnetii (strain CbuG_Q212) (Coxiella burnetii (strain Q212)).